The chain runs to 500 residues: L-arabinose isomerase (500 aa).

Residues Glu306, Glu333, His350, and His450 each coordinate Mn(2+).

It belongs to the arabinose isomerase family. Homohexamer. The cofactor is Mn(2+).

The catalysed reaction is beta-L-arabinopyranose = L-ribulose. The protein operates within carbohydrate degradation; L-arabinose degradation via L-ribulose; D-xylulose 5-phosphate from L-arabinose (bacterial route): step 1/3. Catalyzes the conversion of L-arabinose to L-ribulose. The sequence is that of L-arabinose isomerase from Salmonella paratyphi A (strain ATCC 9150 / SARB42).